The chain runs to 123 residues: WAP four-disulfide core domain protein 5 (123 aa).

The N-terminal stretch at 1–24 (MRIQSLLLLGALLAVGSQLPAVFG) is a signal peptide. 2 WAP domains span residues 27–73 (KGEK…CVPR) and 74–121 (VSVK…RDPA). Intrachain disulfides connect cysteine 34/cysteine 62, cysteine 41/cysteine 66, cysteine 49/cysteine 61, cysteine 55/cysteine 70, cysteine 81/cysteine 109, cysteine 88/cysteine 113, cysteine 96/cysteine 108, and cysteine 102/cysteine 117.

The protein resides in the secreted. Functionally, putative acid-stable proteinase inhibitor. This is WAP four-disulfide core domain protein 5 (WFDC5) from Papio anubis (Olive baboon).